The sequence spans 900 residues: Vacuolar membrane protein pep3 (900 aa).

A disordered region spans residues M1–E20. 4 TPR repeats span residues H314–E345, N373–L406, G408–V436, and M546–I579. Residues D602–E756 form a CHCR repeat. An RING-type; atypical zinc finger spans residues C837–G884.

It belongs to the VPS18 family.

The protein resides in the vacuole membrane. Required for vacuolar biogenesis. This Schizosaccharomyces pombe (strain 972 / ATCC 24843) (Fission yeast) protein is Vacuolar membrane protein pep3 (pep3).